Consider the following 175-residue polypeptide: NADH-quinone oxidoreductase subunit I 2 (175 aa).

4Fe-4S ferredoxin-type domains are found at residues 50–82 (HVLQ…IEAA) and 98–127 (KVYN…HGHG). [4Fe-4S] cluster is bound by residues Cys62, Cys65, Cys68, Cys72, Cys107, Cys110, Cys113, and Cys117.

This sequence belongs to the complex I 23 kDa subunit family. NDH-1 is composed of 14 different subunits. Subunits NuoA, H, J, K, L, M, N constitute the membrane sector of the complex. Requires [4Fe-4S] cluster as cofactor.

It is found in the cell inner membrane. It carries out the reaction a quinone + NADH + 5 H(+)(in) = a quinol + NAD(+) + 4 H(+)(out). Functionally, NDH-1 shuttles electrons from NADH, via FMN and iron-sulfur (Fe-S) centers, to quinones in the respiratory chain. The immediate electron acceptor for the enzyme in this species is believed to be ubiquinone. Couples the redox reaction to proton translocation (for every two electrons transferred, four hydrogen ions are translocated across the cytoplasmic membrane), and thus conserves the redox energy in a proton gradient. This Koribacter versatilis (strain Ellin345) protein is NADH-quinone oxidoreductase subunit I 2.